Consider the following 291-residue polypeptide: 3-hydroxy-5-phosphonooxypentane-2,4-dione thiolase (291 aa).

Residue K203 is the Schiff-base intermediate with substrate of the active site.

Belongs to the DeoC/FbaB aldolase family. In terms of assembly, homodecamer.

Its subcellular location is the cytoplasm. It carries out the reaction dihydroxyacetone phosphate + acetyl-CoA = 3-hydroxy-2,4-dioxopentyl phosphate + CoA. Its function is as follows. Involved in the degradation of phospho-AI-2, thereby terminating induction of the lsr operon and closing the AI-2 signaling cycle. Catalyzes the transfer of an acetyl moiety from 3-hydroxy-5-phosphonooxypentane-2,4-dione to CoA to form glycerone phosphate and acetyl-CoA. In Photorhabdus laumondii subsp. laumondii (strain DSM 15139 / CIP 105565 / TT01) (Photorhabdus luminescens subsp. laumondii), this protein is 3-hydroxy-5-phosphonooxypentane-2,4-dione thiolase.